The following is a 130-amino-acid chain: Small ribosomal subunit protein uS8 (130 aa).

This sequence belongs to the universal ribosomal protein uS8 family. As to quaternary structure, part of the 30S ribosomal subunit.

One of the primary rRNA binding proteins, it binds directly to 16S rRNA central domain where it helps coordinate assembly of the platform of the 30S subunit. In Natronomonas pharaonis (strain ATCC 35678 / DSM 2160 / CIP 103997 / JCM 8858 / NBRC 14720 / NCIMB 2260 / Gabara) (Halobacterium pharaonis), this protein is Small ribosomal subunit protein uS8.